We begin with the raw amino-acid sequence, 95 residues long: MAGSTYGLDKIAGVQGYLVVNPDGAVLASSGDLENDEKTAGVIVDMLQTASMIPLSGDSSHSLKRLSVHFGNFVLMATVTNQRIFIVKRPTTETE.

It belongs to the LAMTOR4 family. In terms of assembly, part of the Ragulator complex.

Its subcellular location is the lysosome. Functionally, regulator of the TOR pathway, a signaling cascade that promotes cell growth in response to growth factors, energy levels, and amino acids. As part of the Ragulator complex, may activate the TOR signaling cascade in response to amino acids. This chain is Ragulator complex protein LAMTOR4 homolog, found in Nematostella vectensis (Starlet sea anemone).